A 520-amino-acid chain; its full sequence is MDFVSRDRISSLPNPVVSHILSFLPTKEAASTSVLSKKWRYLFAYVTNLDFDDSDYQDGKPKSDVELSRSFMEFVDRVLALQGNGSVNKFSLECSNYDVDLARVTGWILNVLGRGVSELDLSILEYPLPSEIFVSKTLVRLKLGPANDLTLTLDRKDVFLPKLKTLYIDCVDVQERGFGFVKLLSGCPVLEELVLMNIGWENWKFCSVSVKTLKRLTFFCEETYENPKSVSFDTPNLVYLEYSDAIASKYPKVNFNSLVEAHIGLRLTEDQSGDADFSEEDYFSEGDEKKQMVGNATDFLKGISTVQILYLSAQAIEVLTFCCEPIPVFNNLIQLTIENNSEIRWDSLPGLLKNCPNLETLVLKRLLHKYNKACGNVCCCKRPKQPSCLSSSPVKVLKIFLFDDNDEEDGSEMRQIKYFLEKMPRLEELVVYYNTAYDPAVLELSKKLQKIPKIASPKCKIQVISENLSLSSTVPSFLTTRWSSLPPEEAYPWVDSPPPQIIDPMLEYGSPPEDDDSWLY.

Residues R6–S54 enclose the F-box domain. LRR repeat units lie at residues C170 to N197, F219 to D244, and N340 to R365.

The sequence is that of F-box/LRR-repeat protein At3g59200 from Arabidopsis thaliana (Mouse-ear cress).